The chain runs to 234 residues: 5'-methylthioadenosine/S-adenosylhomocysteine nucleosidase (234 aa).

Residue Glu-12 is the Proton acceptor of the active site. Substrate is bound by residues Gly-78, Ile-152, and 173–174; that span reads ME. The Proton donor role is filled by Asp-197.

Belongs to the PNP/UDP phosphorylase family. MtnN subfamily.

It carries out the reaction S-adenosyl-L-homocysteine + H2O = S-(5-deoxy-D-ribos-5-yl)-L-homocysteine + adenine. The enzyme catalyses S-methyl-5'-thioadenosine + H2O = 5-(methylsulfanyl)-D-ribose + adenine. The catalysed reaction is 5'-deoxyadenosine + H2O = 5-deoxy-D-ribose + adenine. Its pathway is amino-acid biosynthesis; L-methionine biosynthesis via salvage pathway; S-methyl-5-thio-alpha-D-ribose 1-phosphate from S-methyl-5'-thioadenosine (hydrolase route): step 1/2. Catalyzes the irreversible cleavage of the glycosidic bond in both 5'-methylthioadenosine (MTA) and S-adenosylhomocysteine (SAH/AdoHcy) to adenine and the corresponding thioribose, 5'-methylthioribose and S-ribosylhomocysteine, respectively. Also cleaves 5'-deoxyadenosine, a toxic by-product of radical S-adenosylmethionine (SAM) enzymes, into 5-deoxyribose and adenine. This is 5'-methylthioadenosine/S-adenosylhomocysteine nucleosidase from Desulfotalea psychrophila (strain LSv54 / DSM 12343).